The chain runs to 519 residues: B3 domain-containing protein Os03g0620400 (519 aa).

A DNA-binding region (TF-B3 1) is located at residues 26 to 119 (MKCFHLQMSA…RFEVLILDSD (94 aa)). The interval 138–218 (ERNAAPVDIS…DPQMPPGRNY (81 aa)) is disordered. Residues 189-209 (SGEEGTDSSTSEDESSYELDD) show a composition bias toward acidic residues. DNA-binding regions (TF-B3) lie at residues 249 to 349 (VAIM…LRET) and 416 to 516 (YVSI…IRRN).

The protein localises to the nucleus. The protein is B3 domain-containing protein Os03g0620400 of Oryza sativa subsp. japonica (Rice).